The following is a 1474-amino-acid chain: MARLAAVLWNLCVTAVLVTSATQGLSRAGLPFGLMRRELACEGYPIELRCPGSDVIMVENANYGRTDDKICDADPFQMENVQCYLPDAFKIMSQRCNNRTQCVVVAGSDAFPDPCPGTYKYLEVQYDCVPYKVEQKVFVCPGTLQKVLEPTSTHESEHQSGAWCKDPLQAGDRIYVMPWIPYRTDTLTEYASWEDYVAARHTTTYRLPNRVDGTGFVVYDGAVFYNKERTRNIVKYDLRTRIKSGETVINTANYHDTSPYRWGGKTDIDLAVDENGLWVIYATEGNNGRLVVSQLNPYTLRFEGTWETGYDKRSASNAFMVCGVLYVLRSVYVDDDSEAAGNRVDYAFNTNANREEPVSLTFPNPYQFISSVDYNPRDNQLYVWNNYFVVRYSLEFGPPDPSAGPATSPPLSTTTTARPTPLTSTASPAATTPLRRAPLTTHPVGAINQLGPDLPPATAPVPSTRRPPAPNLHVSPELFCEPREVRRVQWPATQQGMLVERPCPKGTRGIASFQCLPALGLWNPRGPDLSNCTSPWVNQVAQKIKSGENAANIASELARHTRGSIYAGDVSSSVKLMEQLLDILDAQLQALRPIERESAGKNYNKMHKRERTCKDYIKAVVETVDNLLRPEALESWKDMNATEQVHTATMLLDVLEEGAFLLADNVREPARFLAAKENVVLEVTVLNTEGQVQELVFPQEEYPRKNSIQLSAKTIKQNSRNGVVKVVFILYNNLGLFLSTENATVKLAGEAGPGGPGGASLVVNSQVIAASINKESSRVFLMDPVIFTVAHLEDKNHFNANCSFWNYSERSMLGYWSTQGCRLVESNKTHTTCACSHLTNFAVLMAHREIYQGRINELLLSVITWVGIVISLVCLAICISTFCFLRGLQTDRNTIHKNLCINLFLAELLFLVGIDKTQYEIACPIFAGLLHYFFLAAFSWLCLEGVHLYLLLVEVFESEYSRTKYYYLGGYCFPALVVGIAAAIDYRSYGTEKACWLRVDNYFIWSFIGPVSFVIVVNLVFLMVTLHKMIRSSSVLKPDSSRLDNIKSWALGAIALLFLLGLTWAFGLLFINKESVVMAYLFTTFNAFQGVFIFVFHCALQKKVHKEYSKCLRHSYCCIRSPPGGTHGSLKTSAMRSNTRYYTGTQSRIRRMWNDTVRKQTESSFMAGDINSTPTLNRGTMGNHLLTNPVLQPRGGTSPYNTLIAESVGFNPSSPPVFNSPGSYREPKHPLGGREACGMDTLPLNGNFNNSYSLRSGDFPPGDGGPEPPRGRNLADAAAFEKMIISELVHNNLRGSSSAAKGPPPPEPPVPPVPGGGGEEEAGGPGGADRAEIELLYKALEEPLLLPRAQSVLYQSDLDESESCTAEDGATSRPLSSPPGRDSLYASGANLRDSPSYPDSSPEGPSEALPPPPPAPPGPPEIYYTSRPPALVARNPLQGYYQVRRPSHEGYLAAPGLEGPGPDGDGQMQLVTSL.

The signal sequence occupies residues 1–24 (MARLAAVLWNLCVTAVLVTSATQG). Residues 25–858 (LSRAGLPFGL…EIYQGRINEL (834 aa)) lie on the Extracellular side of the membrane. The SUEL-type lectin domain occupies 40 to 129 (ACEGYPIELR…KYLEVQYDCV (90 aa)). Cystine bridges form between C41–C71, C50–C128, C83–C115, C96–C102, and C140–C322. E42 contributes to the alpha-L-rhamnose binding site. N-linked (GlcNAc...) asparagine glycosylation occurs at N98. Residue 117-120 (GTYK) coordinates alpha-L-rhamnose. Residues 139–398 (VCPGTLQKVL…VVRYSLEFGP (260 aa)) form the Olfactomedin-like domain. Residues 400-434 (DPSAGPATSPPLSTTTTARPTPLTSTASPAATTPL) form a disordered region. Low complexity predominate over residues 405 to 434 (PATSPPLSTTTTARPTPLTSTASPAATTPL). Disulfide bonds link C480/C515 and C503/C532. N531, N640, N742, N801, N806, and N827 each carry an N-linked (GlcNAc...) asparagine glycan. The 183-residue stretch at 669-851 (PARFLAAKEN…AVLMAHREIY (183 aa)) folds into the GAIN-B domain. 2 cysteine pairs are disulfide-bonded: C802/C833 and C821/C835. Residues 802–851 (CSFWNYSERSMLGYWSTQGCRLVESNKTHTTCACSHLTNFAVLMAHREIY) are GPS. The chain crosses the membrane as a helical span at residues 859–879 (LLSVITWVGIVISLVCLAICI). At 880 to 893 (STFCFLRGLQTDRN) the chain is on the cytoplasmic side. Residues 894–914 (TIHKNLCINLFLAELLFLVGI) form a helical membrane-spanning segment. Over 915–920 (DKTQYE) the chain is Extracellular. A helical transmembrane segment spans residues 921-941 (IACPIFAGLLHYFFLAAFSWL). The Cytoplasmic portion of the chain corresponds to 942 to 964 (CLEGVHLYLLLVEVFESEYSRTK). The helical transmembrane segment at 965-985 (YYYLGGYCFPALVVGIAAAID) threads the bilayer. The Extracellular portion of the chain corresponds to 986-1002 (YRSYGTEKACWLRVDNY). Residues 1003-1023 (FIWSFIGPVSFVIVVNLVFLM) traverse the membrane as a helical segment. Residues 1024 to 1050 (VTLHKMIRSSSVLKPDSSRLDNIKSWA) lie on the Cytoplasmic side of the membrane. The chain crosses the membrane as a helical span at residues 1051-1071 (LGAIALLFLLGLTWAFGLLFI). The Extracellular portion of the chain corresponds to 1072–1075 (NKES). The helical transmembrane segment at 1076–1096 (VVMAYLFTTFNAFQGVFIFVF) threads the bilayer. The Cytoplasmic segment spans residues 1097–1474 (HCALQKKVHK…DGQMQLVTSL (378 aa)). Residue R1194 is modified to Omega-N-methylarginine. Position 1220 is a phosphoserine (S1220). 4 disordered regions span residues 1248-1273 (FNNS…RGRN), 1294-1328 (RGSS…PGGA), 1360-1429 (ESES…SRPP), and 1451-1474 (YLAA…VTSL). 2 stretches are compositionally biased toward pro residues: residues 1302 to 1314 (GPPP…PPVP) and 1408 to 1420 (ALPP…PGPP). The residue at position 1473 (S1473) is a Phosphoserine.

It belongs to the G-protein coupled receptor 2 family. Adhesion G-protein coupled receptor (ADGR) subfamily. Forms a heterodimer, consisting of a large extracellular region (p120) non-covalently linked to a seven-transmembrane moiety (p85). Interacts with syntaxin and with proteins of the SHANK family via the PDZ domain. Interacts (via extracellular domain) with FLRT1, FLRT2 and FLRT3 (via extracellular domain). Autoproteolytically cleaved into 2 subunits, an extracellular subunit and a seven-transmembrane subunit. This proteolytic processing takes place early in the biosynthetic pathway, either in the endoplasmic reticulum or in the early compartment of the Golgi apparatus.

The protein resides in the cell membrane. The protein localises to the cell projection. It is found in the axon. It localises to the growth cone. Its subcellular location is the synapse. The protein resides in the presynaptic cell membrane. The protein localises to the synaptosome. In terms of biological role, calcium-independent receptor of high affinity for alpha-latrotoxin, an excitatory neurotoxin present in black widow spider venom which triggers massive exocytosis from neurons and neuroendocrine cells. Receptor for TENM2 that mediates heterophilic synaptic cell-cell contact and postsynaptic specialization. Receptor probably implicated in the regulation of exocytosis. The sequence is that of Adhesion G protein-coupled receptor L1 from Homo sapiens (Human).